The following is a 510-amino-acid chain: Hyaluronidase PH-20 (510 aa).

Positions 1 to 35 (MGVLKFKHIFFRSFVKSSGVSQIVFTFLLIPCCLT) are cleaved as a signal peptide. Disulfide bonds link C60–C351 and C224–C238. N82 carries N-linked (GlcNAc...) asparagine glycosylation. E148 (proton donor) is an active-site residue. N-linked (GlcNAc...) asparagine glycosylation is found at N166, N235, N254, and N368. Disulfide bonds link C376/C387, C381/C435, and C437/C464. 3 N-linked (GlcNAc...) asparagine glycosylation sites follow: N393, N440, and N484. S491 carries GPI-anchor amidated serine lipidation. The propeptide at 492 to 510 (TTMFIVNILFLIISSVASL) is removed in mature form.

This sequence belongs to the glycosyl hydrolase 56 family. Testis.

The protein resides in the cell membrane. It catalyses the reaction Random hydrolysis of (1-&gt;4)-linkages between N-acetyl-beta-D-glucosamine and D-glucuronate residues in hyaluronate.. In terms of biological role, involved in sperm-egg adhesion. Upon fertilization sperm must first penetrate a layer of cumulus cells that surrounds the egg before reaching the zona pellucida. The cumulus cells are embedded in a matrix containing hyaluronic acid which is formed prior to ovulation. This protein aids in penetrating the layer of cumulus cells by digesting hyaluronic acid. In Macaca fascicularis (Crab-eating macaque), this protein is Hyaluronidase PH-20 (SPAM1).